The primary structure comprises 280 residues: NAD kinase (280 aa).

Asp-67 (proton acceptor) is an active-site residue. NAD(+) is bound by residues 67 to 68, Arg-72, 138 to 139, Asp-167, Ala-175, 178 to 183, and Gln-237; these read DG, ND, and TAYSLS.

The protein belongs to the NAD kinase family. A divalent metal cation serves as cofactor.

It localises to the cytoplasm. The catalysed reaction is NAD(+) + ATP = ADP + NADP(+) + H(+). Its function is as follows. Involved in the regulation of the intracellular balance of NAD and NADP, and is a key enzyme in the biosynthesis of NADP. Catalyzes specifically the phosphorylation on 2'-hydroxyl of the adenosine moiety of NAD to yield NADP. This is NAD kinase from Aeropyrum pernix (strain ATCC 700893 / DSM 11879 / JCM 9820 / NBRC 100138 / K1).